We begin with the raw amino-acid sequence, 184 residues long: NADH-quinone oxidoreductase subunit B 1 (184 aa).

Cys-37, Cys-38, Cys-103, and Cys-132 together coordinate [4Fe-4S] cluster.

It belongs to the complex I 20 kDa subunit family. In terms of assembly, NDH-1 is composed of 14 different subunits. Subunits NuoB, C, D, E, F, and G constitute the peripheral sector of the complex. [4Fe-4S] cluster is required as a cofactor.

Its subcellular location is the cell membrane. It catalyses the reaction a quinone + NADH + 5 H(+)(in) = a quinol + NAD(+) + 4 H(+)(out). NDH-1 shuttles electrons from NADH, via FMN and iron-sulfur (Fe-S) centers, to quinones in the respiratory chain. The immediate electron acceptor for the enzyme in this species is believed to be a menaquinone. Couples the redox reaction to proton translocation (for every two electrons transferred, four hydrogen ions are translocated across the cytoplasmic membrane), and thus conserves the redox energy in a proton gradient. This chain is NADH-quinone oxidoreductase subunit B 1, found in Streptomyces griseus subsp. griseus (strain JCM 4626 / CBS 651.72 / NBRC 13350 / KCC S-0626 / ISP 5235).